We begin with the raw amino-acid sequence, 455 residues long: Chromosomal replication initiator protein DnaA (455 aa).

The segment at 1–75 is domain I, interacts with DnaA modulators; that stretch reads MDTNNNIEKE…EILSQNKVGM (75 aa). The interval 75–106 is domain II; that stretch reads MHLAHSVDVRIEVAPKIQINAQANINYKAIKT. The segment at 107–321 is domain III, AAA+ region; it reads SVKDSYTFEN…GAIIKISVNA (215 aa). Residues Gly-151, Gly-153, Lys-154, and Thr-155 each coordinate ATP. The segment at 322 to 455 is domain IV, binds dsDNA; sequence NLMNAPIDLN…DKKTAFNSSE (134 aa).

It belongs to the DnaA family. In terms of assembly, oligomerizes as a right-handed, spiral filament on DNA at oriC.

It is found in the cytoplasm. Plays an essential role in the initiation and regulation of chromosomal replication. ATP-DnaA binds to the origin of replication (oriC) to initiate formation of the DNA replication initiation complex once per cell cycle. Binds the DnaA box (a 9 base pair repeat at the origin) and separates the double-stranded (ds)DNA. Forms a right-handed helical filament on oriC DNA; dsDNA binds to the exterior of the filament while single-stranded (ss)DNA is stabiized in the filament's interior. The ATP-DnaA-oriC complex binds and stabilizes one strand of the AT-rich DNA unwinding element (DUE), permitting loading of DNA polymerase. After initiation quickly degrades to an ADP-DnaA complex that is not apt for DNA replication. Binds acidic phospholipids. This chain is Chromosomal replication initiator protein DnaA, found in Helicobacter pylori (strain G27).